The sequence spans 111 residues: Large ribosomal subunit protein uL22 (111 aa).

It belongs to the universal ribosomal protein uL22 family. Part of the 50S ribosomal subunit.

Functionally, this protein binds specifically to 23S rRNA; its binding is stimulated by other ribosomal proteins, e.g. L4, L17, and L20. It is important during the early stages of 50S assembly. It makes multiple contacts with different domains of the 23S rRNA in the assembled 50S subunit and ribosome. In terms of biological role, the globular domain of the protein is located near the polypeptide exit tunnel on the outside of the subunit, while an extended beta-hairpin is found that lines the wall of the exit tunnel in the center of the 70S ribosome. The polypeptide is Large ribosomal subunit protein uL22 (Xanthomonas oryzae pv. oryzae (strain PXO99A)).